A 718-amino-acid chain; its full sequence is Sodium/myo-inositol cotransporter (718 aa).

At 1-9 the chain is on the extracellular side; the sequence is MRAVLDTAD. A helical transmembrane segment spans residues 10–29; it reads IAIVALYFILVMCIGFFAMW. The Cytoplasmic portion of the chain corresponds to 30–38; it reads KSNRSTVSG. The helical transmembrane segment at 39–57 threads the bilayer; it reads YFLAGRSMTWVAIGASLFV. The Extracellular portion of the chain corresponds to 58–86; it reads SNIGSEHFIGLAGSGAASGFAVGAWEFNA. A helical membrane pass occupies residues 87-110; that stretch reads LLLLQLLGWVFIPIYIRSGVYTMP. Residues 111–123 lie on the Cytoplasmic side of the membrane; it reads EYLSKRFGGHRIQ. The chain crosses the membrane as a helical span at residues 124-144; the sequence is VYFAALSLILYIFTKLSVDLY. At 145–157 the chain is on the extracellular side; it reads SGALFIQESLGWN. The chain crosses the membrane as a helical span at residues 158 to 183; the sequence is LYVSVILLIGMTALLTVTGGLVAVIY. The Cytoplasmic segment spans residues 184–186; it reads TDT. A helical membrane pass occupies residues 187–205; it reads LQALLMIIGALTLMIISIM. The Extracellular segment spans residues 206–303; it reads EIGGFEEVKR…HAKGSTLMAG (98 aa). Asn232 carries N-linked (GlcNAc...) asparagine glycosylation. A helical membrane pass occupies residues 304–324; it reads FLKLLPMFIIVVPGMISRILF. Residues 325-353 are Cytoplasmic-facing; sequence TDDIACINPEHCMLVCGSRAGCSNIAYPR. The helical transmembrane segment at 354-376 threads the bilayer; the sequence is LVMKLVPVGLRGLMMAVMIAALM. Residues 377–406 are Extracellular-facing; the sequence is SDLDSIFNSASTIFTLDVYKLIRKSASSRE. Residues 407 to 430 form a helical membrane-spanning segment; the sequence is LMIVGRIFVAFMVVISIAWVPIIV. At 431-443 the chain is on the cytoplasmic side; sequence EMQGGQMYLYIQE. Residues 444–462 form a helical membrane-spanning segment; the sequence is VADYLTPPVAALFLLAIFW. Over 463-510 the chain is Extracellular; it reads KRCNEQGAFYGGMAGFVLGAVRLILAFAYRAPECDQPDNRPGFIKDIH. The chain crosses the membrane as a helical span at residues 511–532; the sequence is YMYVATGLFWVTGLITVIVSLL. At 533–695 the chain is on the cytoplasmic side; that stretch reads TPPPTKEQIR…QMLEETRQVK (163 aa). Ser594 and Ser632 each carry phosphoserine. A helical membrane pass occupies residues 696 to 716; it reads VILNIGLFAVCSLGIFMFVYF. Residues 717–718 are Extracellular-facing; it reads SL.

Belongs to the sodium:solute symporter (SSF) (TC 2.A.21) family. In terms of assembly, interacts with KCNQ2 (via the pore module). Interacts with KCNQ1; this interaction is direct. Forms coregulatory complexes with ion channels KCNQ2-KCNQ3 and KCNQ1-KCNE2.

It is found in the apical cell membrane. It localises to the basolateral cell membrane. The enzyme catalyses myo-inositol(out) + 2 Na(+)(out) = myo-inositol(in) + 2 Na(+)(in). It carries out the reaction scyllo-inositol(out) + 2 Na(+)(out) = scyllo-inositol(in) + 2 Na(+)(in). Electrogenic Na(+)-coupled sugar symporter that actively transports myo-inositol and its stereoisomer scyllo-inositol across the plasma membrane, with a Na(+) to sugar coupling ratio of 2:1. Maintains myo-inositol concentration gradient that defines cell volume and fluid balance during osmotic stress, in particular in the fetoplacental unit and central nervous system. Forms coregulatory complexes with voltage-gated K(+) ion channels, allosterically altering ion selectivity, voltage dependence and gating kinetics of the channel. In turn, K(+) efflux through the channel forms a local electrical gradient that modulates electrogenic Na(+)-coupled myo-inositol influx through the transporter. Associates with KCNQ1-KCNE2 channel in the apical membrane of choroid plexus epithelium and regulates the myo-inositol gradient between blood and cerebrospinal fluid with an impact on neuron excitability. Associates with KCNQ2-KCNQ3 channel altering ion selectivity, increasing Na(+) and Cs(+) permeation relative to K(+) permeation. Provides myo-inositol precursor for biosynthesis of phosphoinositides such as PI(4,5)P2, thus indirectly affecting the activity of phosphoinositide-dependent ion channels and Ca(2+) signaling upon osmotic stress. This is Sodium/myo-inositol cotransporter from Homo sapiens (Human).